The sequence spans 365 residues: Chorismate synthase (365 aa).

R46 contributes to the NADP(+) binding site. Residues 124–126 (RAS), G284, 299–303 (KPTPS), and R326 contribute to the FMN site.

The protein belongs to the chorismate synthase family. FMNH2 serves as cofactor.

It catalyses the reaction 5-O-(1-carboxyvinyl)-3-phosphoshikimate = chorismate + phosphate. Its pathway is metabolic intermediate biosynthesis; chorismate biosynthesis; chorismate from D-erythrose 4-phosphate and phosphoenolpyruvate: step 7/7. Its function is as follows. Catalyzes the anti-1,4-elimination of the C-3 phosphate and the C-6 proR hydrogen from 5-enolpyruvylshikimate-3-phosphate (EPSP) to yield chorismate, which is the branch point compound that serves as the starting substrate for the three terminal pathways of aromatic amino acid biosynthesis. This reaction introduces a second double bond into the aromatic ring system. This is Chorismate synthase from Pyrobaculum neutrophilum (strain DSM 2338 / JCM 9278 / NBRC 100436 / V24Sta) (Thermoproteus neutrophilus).